Consider the following 313-residue polypeptide: Protoheme IX farnesyltransferase (313 aa).

Transmembrane regions (helical) follow at residues 32–52 (VMSLVVFTALVGMLLAPGDFH), 53–73 (PVLAVTAMLCIAVGGGAAGAL), 120–140 (VLVNWIAAALLAFTIFFYVVI), 153–173 (IVIGGAAGALPPVVAWAAVTG), 180–200 (LLLFAIIFFWTPPHFWALALF), 226–246 (ILLYTIVLVAVAAAPWPLGYF), 248–268 (AVYGIASLALGGWMLVLAIRV), and 284–304 (LFKFSILYLFALFSILLIEVV).

The protein belongs to the UbiA prenyltransferase family. Protoheme IX farnesyltransferase subfamily.

The protein resides in the cell inner membrane. The catalysed reaction is heme b + (2E,6E)-farnesyl diphosphate + H2O = Fe(II)-heme o + diphosphate. The protein operates within porphyrin-containing compound metabolism; heme O biosynthesis; heme O from protoheme: step 1/1. Functionally, converts heme B (protoheme IX) to heme O by substitution of the vinyl group on carbon 2 of heme B porphyrin ring with a hydroxyethyl farnesyl side group. The protein is Protoheme IX farnesyltransferase of Rhodopseudomonas palustris (strain BisB5).